Here is an 85-residue protein sequence, read N- to C-terminus: Large ribosomal subunit protein bL27 (85 aa).

The interval Met1–Gly22 is disordered.

It belongs to the bacterial ribosomal protein bL27 family.

The sequence is that of Large ribosomal subunit protein bL27 from Pseudoalteromonas translucida (strain TAC 125).